We begin with the raw amino-acid sequence, 319 residues long: Olfactory receptor 8K1 (319 aa).

Over 1-31 (MNHVVKHNHTAVTKVTEFILMGITDNPGLQA) the chain is Extracellular. The N-linked (GlcNAc...) asparagine glycan is linked to N8. A helical membrane pass occupies residues 32–52 (PLFGLFLIIYLVTVIGNLGMV). Residues 53–60 (ILTYLDSK) lie on the Cytoplasmic side of the membrane. A helical membrane pass occupies residues 61–81 (LHTPMYFFLRHLSITDLGYST). Residues 82–105 (VIAPKMLVNFIVHKNTISYNWYAT) lie on the Extracellular side of the membrane. Residues 106 to 126 (QLAFFEIFIISELFILSAMAY) traverse the membrane as a helical segment. The Cytoplasmic portion of the chain corresponds to 127 to 145 (DRYVAICKPLLYVIIMAEK). Residues 146–166 (VLWVLVIVPYLYSTFVSLFLT) traverse the membrane as a helical segment. Residues 167–203 (IKLFKLSFCGSNIISYFYCDCIPLMSILCSDTNELEL) lie on the Extracellular side of the membrane. A helical transmembrane segment spans residues 204-223 (IILIFSGCNLLFSLSIVLIS). Residues 224-243 (YMFILVAILRMNSRKGRYKA) lie on the Cytoplasmic side of the membrane. Residues 244-264 (FSTCSSHLTVVIMFYGTLLFI) traverse the membrane as a helical segment. At 265–277 (YLQPKSSHTLAID) the chain is on the extracellular side. A helical membrane pass occupies residues 278 to 298 (KMASVFYTLLIPMLNPLIYSL). The Cytoplasmic segment spans residues 299 to 319 (RNKEVKDALKRTLTNRFKIPI).

The protein belongs to the G-protein coupled receptor 1 family.

It localises to the cell membrane. Functionally, odorant receptor. The chain is Olfactory receptor 8K1 (OR8K1) from Homo sapiens (Human).